We begin with the raw amino-acid sequence, 390 residues long: Nuclear receptor subfamily 2 group F member 6 (390 aa).

The segment covering M1–T15 has biased composition (gly residues). Positions M1–R50 are disordered. A phosphoserine mark is found at S35 and S41. Residues Q54–P129 constitute a DNA-binding region (nuclear receptor). NR C4-type zinc fingers lie at residues C57–C77 and C93–C117. In terms of domain architecture, NR LBD spans P157 to G380. Positions L314 to G390 are important for dimerization.

This sequence belongs to the nuclear hormone receptor family. NR2 subfamily. Binds DNA as dimer; homodimer and heterodimer with NR2F2 and probably NR2F1. Interacts with THRB.

It is found in the nucleus. In terms of biological role, transcription factor predominantly involved in transcriptional repression. Binds to promoter/enhancer response elements that contain the imperfect 5'-AGGTCA-3' direct or inverted repeats with various spacings which are also recognized by other nuclear hormone receptors. Involved in modulation of hormonal responses. Represses transcriptional activity of the lutropin-choriogonadotropic hormone receptor/LHCGR gene, the renin/REN gene and the oxytocin-neurophysin/OXT gene. Represses the triiodothyronine-dependent and -independent transcriptional activity of the thyroid hormone receptor gene in a cell type-specific manner. The corepressing function towards thyroid hormone receptor beta/THRB involves at least in part the inhibition of THRB binding to triiodothyronine response elements (TREs) by NR2F6. Inhibits NFATC transcription factor DNA binding and subsequently its transcriptional activity. Acts as transcriptional repressor of IL-17 expression in Th-17 differentiated CD4(+) T cells and may be involved in induction and/or maintenance of peripheral immunological tolerance and autoimmunity. Involved in development of forebrain circadian clock; is required early in the development of the locus coeruleus (LC). This Rattus norvegicus (Rat) protein is Nuclear receptor subfamily 2 group F member 6 (Nr2f6).